Reading from the N-terminus, the 84-residue chain is Seminal ribonuclease (84 aa).

Cystine bridges form between cysteine 10–cysteine 65, cysteine 28–cysteine 80, and cysteine 35–cysteine 42. Substrate is bound by residues 11-15 (KPVNT), lysine 36, and arginine 55.

Belongs to the pancreatic ribonuclease family. Homodimer; disulfide-linked.

Its subcellular location is the secreted. It catalyses the reaction an [RNA] containing cytidine + H2O = an [RNA]-3'-cytidine-3'-phosphate + a 5'-hydroxy-ribonucleotide-3'-[RNA].. The enzyme catalyses an [RNA] containing uridine + H2O = an [RNA]-3'-uridine-3'-phosphate + a 5'-hydroxy-ribonucleotide-3'-[RNA].. The polypeptide is Seminal ribonuclease (SRN) (Giraffa camelopardalis (Giraffe)).